The following is a 455-amino-acid chain: Transcription factor mokH (455 aa).

The interval 1–22 (MALSPVQDPPSHTDKTMPRRAF) is disordered. Positions 26–58 (CDRCHAQKIKCIGSEGAVARASCQRCQQAGLRC) form a DNA-binding region, zn(2)-C6 fungal-type. Disordered regions lie at residues 68-113 (KLPK…DSSG) and 296-317 (LTPL…RSSV). Over residues 75 to 88 (AESSPASSTAGLHT) the composition is skewed to polar residues. Positions 89-113 (SSSDSSPPVPSDGLPLDLPGPDSSG) are enriched in low complexity.

The protein resides in the nucleus. Its function is as follows. Transcription factor that regulates the gene cluster that mediates the biosynthesis of monakolin K, also known as lovastatin, and which acts as a potent competitive inhibitor of HMG-CoA reductase. Monakolin K biosynthesis is performed in two stages. The first stage is catalyzed by the nonaketide synthase mokA, which belongs to type I polyketide synthases and catalyzes the iterative nine-step formation of the polyketide. This PKS stage is completed by the action of dehydrogenase mokE, which catalyzes the NADPH-dependent reduction of the unsaturated tetra-, penta- and heptaketide intermediates that arise during the mokA-mediated biosynthesis of the nonaketide chain and leads to dihydromonacolin L. Covalently bound dihydromonacolin L is released from mokA by the mokD esterase. Conversion of dihydromonacolin L into monacolin L and then monacolin J is subsequently performed with the participation of molecular oxygen and P450 monoogygenase mokC. Finally, mokF performs the conversion of monacoline J to monacoline K through the addition of the side-chain diketide moiety (2R)-2-methylbutanoate produced by the diketide synthase mokB. HMG-CoA reductase mokG may act as a down-regulator of monacolin K production. The protein is Transcription factor mokH of Monascus pilosus (Red mold).